Consider the following 37-residue polypeptide: Cytochrome b6-f complex subunit 5 (37 aa).

The chain crosses the membrane as a helical span at residues 5 to 25; sequence LLSGIVLGLVPITLAGLFVTA.

It belongs to the PetG family. In terms of assembly, the 4 large subunits of the cytochrome b6-f complex are cytochrome b6, subunit IV (17 kDa polypeptide, PetD), cytochrome f and the Rieske protein, while the 4 small subunits are PetG, PetL, PetM and PetN. The complex functions as a dimer.

It is found in the plastid. The protein resides in the chloroplast thylakoid membrane. Its function is as follows. Component of the cytochrome b6-f complex, which mediates electron transfer between photosystem II (PSII) and photosystem I (PSI), cyclic electron flow around PSI, and state transitions. PetG is required for either the stability or assembly of the cytochrome b6-f complex. The polypeptide is Cytochrome b6-f complex subunit 5 (Gnetum parvifolium (Small-leaved jointfir)).